The sequence spans 316 residues: Ribonuclease Z (316 aa).

7 residues coordinate Zn(2+): His63, His65, Asp67, His68, His143, Asp213, and His271. Asp67 serves as the catalytic Proton acceptor.

It belongs to the RNase Z family. Homodimer. The cofactor is Zn(2+).

The enzyme catalyses Endonucleolytic cleavage of RNA, removing extra 3' nucleotides from tRNA precursor, generating 3' termini of tRNAs. A 3'-hydroxy group is left at the tRNA terminus and a 5'-phosphoryl group is left at the trailer molecule.. Zinc phosphodiesterase, which displays some tRNA 3'-processing endonuclease activity. Probably involved in tRNA maturation, by removing a 3'-trailer from precursor tRNA. The protein is Ribonuclease Z of Bacteroides thetaiotaomicron (strain ATCC 29148 / DSM 2079 / JCM 5827 / CCUG 10774 / NCTC 10582 / VPI-5482 / E50).